Here is a 709-residue protein sequence, read N- to C-terminus: Early transcription factor 82 kDa subunit (709 aa).

Belongs to the poxviridae VETF large subunit family. In terms of assembly, heterodimer of a 70 kDa and a 82 kDa subunit. Part of the early transcription complex composed of ETF, RAP94, and the DNA-directed RNA polymerase.

The protein localises to the virion. Acts with RNA polymerase to initiate transcription from early gene promoters. Is recruited by the RPO-associated protein of 94 kDa (RAP94) to form the early transcription complex, which also contains the core RNA polymerase. ETF heterodimer binds to early gene promoters. The sequence is that of Early transcription factor 82 kDa subunit (VETFL) from Vertebrata (FPV).